The chain runs to 799 residues: Protein translocase subunit SecA (799 aa).

Residues Gln-85, 103-107 (GEGKT), and Asp-504 contribute to the ATP site.

It belongs to the SecA family. As to quaternary structure, monomer and homodimer. Part of the essential Sec protein translocation apparatus which comprises SecA, SecYEG and auxiliary proteins SecDF. Other proteins may also be involved.

The protein localises to the cell membrane. Its subcellular location is the cytoplasm. The enzyme catalyses ATP + H2O + cellular proteinSide 1 = ADP + phosphate + cellular proteinSide 2.. Part of the Sec protein translocase complex. Interacts with the SecYEG preprotein conducting channel. Has a central role in coupling the hydrolysis of ATP to the transfer of proteins into and across the cell membrane, serving as an ATP-driven molecular motor driving the stepwise translocation of polypeptide chains across the membrane. This is Protein translocase subunit SecA from Lactobacillus acidophilus (strain ATCC 700396 / NCK56 / N2 / NCFM).